Here is a 180-residue protein sequence, read N- to C-terminus: ATP-dependent protease subunit HslV (180 aa).

Threonine 5 is a catalytic residue. Na(+)-binding residues include glycine 161, cysteine 164, and threonine 167.

This sequence belongs to the peptidase T1B family. HslV subfamily. In terms of assembly, a double ring-shaped homohexamer of HslV is capped on each side by a ring-shaped HslU homohexamer. The assembly of the HslU/HslV complex is dependent on binding of ATP.

It localises to the cytoplasm. It carries out the reaction ATP-dependent cleavage of peptide bonds with broad specificity.. Its activity is regulated as follows. Allosterically activated by HslU binding. Its function is as follows. Protease subunit of a proteasome-like degradation complex believed to be a general protein degrading machinery. The protein is ATP-dependent protease subunit HslV of Campylobacter jejuni subsp. jejuni serotype O:6 (strain 81116 / NCTC 11828).